A 128-amino-acid chain; its full sequence is Cytochrome c-type biogenesis protein CcmE (128 aa).

Residues 1–8 are Cytoplasmic-facing; the sequence is MQKRVRNR. Residues 9–29 form a helical; Signal-anchor for type II membrane protein membrane-spanning segment; sequence LITIIICFCSAFLGIGIILYN. Residues 30–128 lie on the Periplasmic side of the membrane; sequence LENNIVFFLP…KHDENYRPTR (99 aa). Residues His-120 and Tyr-124 each contribute to the heme site.

The protein belongs to the CcmE/CycJ family.

It localises to the cell inner membrane. Heme chaperone required for the biogenesis of c-type cytochromes. Transiently binds heme delivered by CcmC and transfers the heme to apo-cytochromes in a process facilitated by CcmF and CcmH. The protein is Cytochrome c-type biogenesis protein CcmE of Rickettsia canadensis (strain McKiel).